We begin with the raw amino-acid sequence, 66 residues long: Venom peptide CtAPI (66 aa).

Disulfide bonds link Cys-7/Cys-44, Cys-16/Cys-40, Cys-20/Cys-33, Cys-24/Cys-64, and Cys-46/Cys-58. The TIL domain maps to 7 to 64 (CEKDEEFVNCAPRCPQNCRNIRSYQPCLVLTPVCAPGCVCRSGKVKNDRGDCVSITDC).

It belongs to the serine protease inhibitor-like (TIL domain-containing) family. As to expression, expressed by the venom gland.

It is found in the secreted. Functionally, serine protease inhibitor. This is Venom peptide CtAPI from Chaerilus tricostatus (Scorpion).